The following is a 457-amino-acid chain: Argininosuccinate lyase (457 aa).

The protein belongs to the lyase 1 family. Argininosuccinate lyase subfamily.

Its subcellular location is the cytoplasm. It catalyses the reaction 2-(N(omega)-L-arginino)succinate = fumarate + L-arginine. It participates in amino-acid biosynthesis; L-arginine biosynthesis; L-arginine from L-ornithine and carbamoyl phosphate: step 3/3. The protein is Argininosuccinate lyase of Yersinia pseudotuberculosis serotype O:1b (strain IP 31758).